The chain runs to 143 residues: Large ribosomal subunit protein uL15 (143 aa).

Positions 1–51 are disordered; the sequence is MELNTIKPASGAKHAKRRVGRGIGSGLGKTAGRGHKGQKSRAGGYHKVGFE. Residues 21–31 show a composition bias toward gly residues; the sequence is RGIGSGLGKTA.

It belongs to the universal ribosomal protein uL15 family. As to quaternary structure, part of the 50S ribosomal subunit.

In terms of biological role, binds to the 23S rRNA. In Methylibium petroleiphilum (strain ATCC BAA-1232 / LMG 22953 / PM1), this protein is Large ribosomal subunit protein uL15.